We begin with the raw amino-acid sequence, 235 residues long: STARD3 N-terminal-like protein (235 aa).

Position 1 is an N-acetylmethionine (methionine 1). Positions 1 to 20 are disordered; sequence MNHLPEHMENTLTGSQSSHA. The Cytoplasmic segment spans residues 1–53; that stretch reads MNHLPEHMENTLTGSQSSHASLRDIHSINPAQLMARIESYEGREKKGISDVRR. Residues 10 to 20 show a composition bias toward polar residues; that stretch reads NTLTGSQSSHA. Residues serine 15, serine 21, and serine 27 each carry the phosphoserine modification. An MENTAL domain is found at 48–218; that stretch reads ISDVRRTFCL…YSPPESEAGS (171 aa). The chain crosses the membrane as a helical span at residues 54–74; that stretch reads TFCLFVTFDLLFVTLLWIIEL. The Extracellular segment spans residues 75-97; that stretch reads NVNGGIENTLKKEVIHYDYYSSY. The chain crosses the membrane as a helical span at residues 98 to 118; the sequence is FDIFLLAVFRFKVLILGYAVC. Residues 119 to 122 are Cytoplasmic-facing; that stretch reads RLRH. A helical membrane pass occupies residues 123–143; that stretch reads WWAIALTTAVTSAFLLAKVIL. Residues 144–150 lie on the Extracellular side of the membrane; sequence SKLFSQG. The helical transmembrane segment at 151 to 171 threads the bilayer; the sequence is AFGYVLPIISFILAWIETWFL. At 172–235 the chain is on the cytoplasmic side; sequence DFKVLPQEAE…QESEKPLLEL (64 aa). At serine 193 the chain carries Phosphoserine. The tract at residues 202–235 is disordered; it reads GLSDGQFYSPPESEAGSEEEAEEKQESEKPLLEL. The FFAT motif lies at 208–213; it reads FYSPPE. Basic and acidic residues predominate over residues 225–235; it reads KQESEKPLLEL.

It belongs to the STARD3 family. Homodimer. Interacts (via the MENTAL domain) with STARD3NL. Interacts (via FFAT motif) with VAPA. Interacts (via FFAT motif) with VAPB. Interacts (via FFAT motif) with MOSPD2 (via MSP domain).

The protein localises to the late endosome membrane. Its function is as follows. Tethering protein that creates contact site between the endoplasmic reticulum and late endosomes: localizes to late endosome membranes and contacts the endoplasmic reticulum via interaction with VAPA and VAPB. In Mus musculus (Mouse), this protein is STARD3 N-terminal-like protein.